The primary structure comprises 582 residues: Tetratricopeptide repeat protein 24 (582 aa).

The segment at 1–31 is disordered; sequence MSSPNPEDVPRRPEPEPSSSNKKKKKRKWLR. 8 TPR repeats span residues 36 to 69, 79 to 112, 117 to 150, 154 to 187, 236 to 271, 273 to 306, 313 to 346, and 353 to 386; these read IQALTRAGHGALQAGQNHEALNNFQRAFLLASKA, QACAFNLGAAYVETGDPARGLELLLRAHPEEKAQ, GDQCFNVALAYHALGELPQALAWYHRALGHYQPQ, GEAWAKMGACYQALGQPELAAHCLQEASQAYAQE, GHLYNDLGLGYSQLQLFPLAVEAFLQALPLCWVPGE, ATVLRNLGMAHNALGNYQEAREFHQKAADLHGSV, GRSFGSLAFALSQLGDHKAARDNYLHALQAARDS, and WQACEGLGAAAARLGQYDQALKYYKEALAQCQKE. Disordered stretches follow at residues 418–481 and 548–582; these read TSAP…RAGP and VPNGPQANRSSRWPRESLSRSRQRRPMESGICTIV. Residues 441–454 show a composition bias toward polar residues; the sequence is GSSTAGVQHRSSSG. Residues 462–472 are compositionally biased toward basic and acidic residues; the sequence is EGHQKKKEERS.

The sequence is that of Tetratricopeptide repeat protein 24 (TTC24) from Homo sapiens (Human).